Consider the following 235-residue polypeptide: Fibrillarin-like rRNA/tRNA 2'-O-methyltransferase (235 aa).

Residues 91–92 (TT), 110–111 (EF), 137–138 (DA), and 157–160 (DVAQ) each bind S-adenosyl-L-methionine.

The protein belongs to the methyltransferase superfamily. Fibrillarin family. In terms of assembly, interacts with nop5. Component of box C/D small ribonucleoprotein (sRNP) particles that contain rpl7ae, FlpA and nop5, plus a guide RNA.

In terms of biological role, involved in pre-rRNA and tRNA processing. Utilizes the methyl donor S-adenosyl-L-methionine to catalyze the site-specific 2'-hydroxyl methylation of ribose moieties in rRNA and tRNA. Site specificity is provided by a guide RNA that base pairs with the substrate. Methylation occurs at a characteristic distance from the sequence involved in base pairing with the guide RNA. The sequence is that of Fibrillarin-like rRNA/tRNA 2'-O-methyltransferase from Pyrobaculum neutrophilum (strain DSM 2338 / JCM 9278 / NBRC 100436 / V24Sta) (Thermoproteus neutrophilus).